The sequence spans 52 residues: Conotoxin reg3h (52 aa).

Ala1 is a signal peptide. Positions Leu2–Arg33 are excised as a propeptide. 3 cysteine pairs are disulfide-bonded: Cys35–Cys49, Cys36–Cys47, and Cys41–Cys50. A 4-hydroxyproline mark is found at Pro38, Pro48, and Pro51. Asn52 bears the Asparagine amide mark.

Expressed by the venom duct.

It localises to the secreted. In Conus regius (Crown cone), this protein is Conotoxin reg3h.